A 133-amino-acid polypeptide reads, in one-letter code: Phosphoribosyl-ATP pyrophosphatase (133 aa).

The tract at residues 1–22 is disordered; it reads MGKPATKPAPKPSKQQDDKKSD.

This sequence belongs to the PRA-PH family.

The protein localises to the cytoplasm. The catalysed reaction is 1-(5-phospho-beta-D-ribosyl)-ATP + H2O = 1-(5-phospho-beta-D-ribosyl)-5'-AMP + diphosphate + H(+). Its pathway is amino-acid biosynthesis; L-histidine biosynthesis; L-histidine from 5-phospho-alpha-D-ribose 1-diphosphate: step 2/9. The protein is Phosphoribosyl-ATP pyrophosphatase of Gluconobacter oxydans (strain 621H) (Gluconobacter suboxydans).